Reading from the N-terminus, the 29-residue chain is Thrombin-like enzyme collinein-2 (29 aa).

In terms of assembly, monomer. Expressed by the venom gland.

It localises to the secreted. Functionally, thrombin-like snake venom serine protease. This Crotalus durissus collilineatus (Brazilian rattlesnake) protein is Thrombin-like enzyme collinein-2.